The following is a 58-amino-acid chain: UPF0509 protein YciZ (58 aa).

This sequence belongs to the UPF0509 family.

The sequence is that of UPF0509 protein YciZ from Escherichia fergusonii (strain ATCC 35469 / DSM 13698 / CCUG 18766 / IAM 14443 / JCM 21226 / LMG 7866 / NBRC 102419 / NCTC 12128 / CDC 0568-73).